The following is a 490-amino-acid chain: Fumitremorgin C monooxygenase (490 aa).

A helical membrane pass occupies residues 12–32 (LGVVGASLIVILGIILLFPLG). Cysteine 442 is a binding site for heme.

It belongs to the cytochrome P450 family. Heme serves as cofactor.

The protein resides in the membrane. It catalyses the reaction fumitremorgin C + 2 reduced [NADPH--hemoprotein reductase] + 2 O2 = 12alpha,13alpha-dihydroxyfumitremorgin C + 2 oxidized [NADPH--hemoprotein reductase] + 2 H2O + 2 H(+). It functions in the pathway mycotoxin biosynthesis. Cytochrome P450 monooxygenase; part of the gene cluster that mediates the biosynthesis of fumitremorgins, indole alkaloids that carry not only intriguing chemical structures, but also interesting biological and pharmacological activities. The biosynthesis of fumitremorgin-type alkaloids begins by condensation of the two amino acids L-tryptophan and L-proline to brevianamide F, catalyzed by the non-ribosomal peptide synthetase ftmA. Brevianamide F is then prenylated by the prenyltransferase ftmPT1/ftmB in the presence of dimethylallyl diphosphate, resulting in the formation of tryprostatin B. The three cytochrome P450 monooxygenases, ftmP450-1/ftmC, ftmP450-2/ftmE and ftmP450-3/FtmG, are responsible for the conversion of tryprostatin B to 6-hydroxytryprostatin B, tryprostatin A to fumitremorgin C and fumitremorgin C to 12,13-dihydroxyfumitremorgin C, respectively. The putative methyltransferase ftmMT/ftmD is expected for the conversion of 6-hydroxytryprostatin B to tryprostatin A. FtmPT2/FtmH catalyzes the prenylation of 12,13-dihydroxyfumitre-morgin C in the presence of dimethylallyl diphosphate, resulting in the formation of fumitremorgin B. Fumitremorgin B is further converted to verruculogen by ftmOx1/ftmF via the insertion of an endoperoxide bond between the two prenyl moieties. In some fungal species, verruculogen is further converted to fumitremorgin A, but the enzymes involved in this step have not been identified yet. The chain is Fumitremorgin C monooxygenase from Aspergillus fumigatus (strain ATCC MYA-4609 / CBS 101355 / FGSC A1100 / Af293) (Neosartorya fumigata).